A 444-amino-acid polypeptide reads, in one-letter code: Probable glycine dehydrogenase (decarboxylating) subunit 1 (444 aa).

Belongs to the GcvP family. N-terminal subunit subfamily. The glycine cleavage system is composed of four proteins: P, T, L and H. In this organism, the P 'protein' is a heterodimer of two subunits.

It carries out the reaction N(6)-[(R)-lipoyl]-L-lysyl-[glycine-cleavage complex H protein] + glycine + H(+) = N(6)-[(R)-S(8)-aminomethyldihydrolipoyl]-L-lysyl-[glycine-cleavage complex H protein] + CO2. Its function is as follows. The glycine cleavage system catalyzes the degradation of glycine. The P protein binds the alpha-amino group of glycine through its pyridoxal phosphate cofactor; CO(2) is released and the remaining methylamine moiety is then transferred to the lipoamide cofactor of the H protein. This Prosthecochloris aestuarii (strain DSM 271 / SK 413) protein is Probable glycine dehydrogenase (decarboxylating) subunit 1.